Reading from the N-terminus, the 350-residue chain is Nicotinate-nucleotide--dimethylbenzimidazole phosphoribosyltransferase (350 aa).

The active-site Proton acceptor is Glu317.

The protein belongs to the CobT family.

It catalyses the reaction 5,6-dimethylbenzimidazole + nicotinate beta-D-ribonucleotide = alpha-ribazole 5'-phosphate + nicotinate + H(+). It participates in nucleoside biosynthesis; alpha-ribazole biosynthesis; alpha-ribazole from 5,6-dimethylbenzimidazole: step 1/2. Functionally, catalyzes the synthesis of alpha-ribazole-5'-phosphate from nicotinate mononucleotide (NAMN) and 5,6-dimethylbenzimidazole (DMB). The sequence is that of Nicotinate-nucleotide--dimethylbenzimidazole phosphoribosyltransferase from Shewanella sp. (strain ANA-3).